The following is a 496-amino-acid chain: UDP-glycosyltransferase 73C2 (496 aa).

UDP-alpha-D-glucose is bound by residues Ser297, 357-359 (SPQ), 374-382 (HCGWNSTLE), and 396-399 (FGDQ).

This sequence belongs to the UDP-glycosyltransferase family.

The polypeptide is UDP-glycosyltransferase 73C2 (UGT73C2) (Arabidopsis thaliana (Mouse-ear cress)).